A 182-amino-acid chain; its full sequence is Dipetalodipin (182 aa).

Residues 1–18 form the signal peptide; it reads MKTIIAAIFLGILMHAFA. 3 cysteine pairs are disulfide-bonded: Cys-21–Cys-134, Cys-55–Cys-181, and Cys-87–Cys-103.

The protein belongs to the calycin superfamily. Triabin family. As to expression, expressed in salivary glands.

Its subcellular location is the secreted. Inhibits platelet aggregation, vasoconstriction, and angiogenesis through binding to distinct eicosanoids involved in inflammation (acts as a scavenger), and has a role in inhibiting host innate immunity by impairing platelet-assisted formation of neutrophil extracellular traps (NETs). Inhibits platelet aggregation by collagen (IC(50)=30 nM), thromboxane A2 mimetic (TXA2 mimetic), or arachidonic acid (AA) without affecting aggregation induced by ADP, convulxin (GP6 agonist), PMA, and ristocetin (vWF-dependent platelet agglutinator). Binds with high affinity to TXA2, TXB2, prostaglandine H2 mimetic (PGH2 mimetic), PGD2, PGJ2, and PGF2alpha. Also interacts with 15(S)-hydroxyeicosatetraenoic acid (HETE), being the first calycin/lipocalin described to date to bind to a derivative of 15-lipoxygenase. Binding is not observed to other prostaglandins, leukotrienes, HETEs, lipids, and biogenic amines. It prevents contraction of rat uterus stimulated by PGF2alpha and induces relaxation of aorta previously contracted with TXA2 mimetic. In addition, it inhibits angiogenesis mediated by 15(S)-HETE and does not enhance inhibition of collagen-induced platelet aggregation by SQ29548 (TXA2 antagonist) and indomethacin. Also impairs platelet-assisted formation of neutrophil extracellular traps (NETs). NETs are web-like structures of DNA and proteins that play an important role in killing of pathogens. In addition, NETs are implicated in thrombus formation. In vivo, this protein exhibits antithrombotic activity in two distinct mice models that are highly dependent on platelets. It is noteworthy that it inhibits thrombosis without promoting excessive bleeding. This chain is Dipetalodipin, found in Dipetalogaster maximus (Blood-sucking bug).